The sequence spans 218 residues: Sec-independent protein translocase protein TatB (218 aa).

The helical transmembrane segment at methionine 1–glycine 21 threads the bilayer. 2 disordered regions span residues alanine 126–lysine 145 and serine 174–arginine 218. Positions histidine 199–arginine 218 are enriched in basic and acidic residues.

This sequence belongs to the TatB family. The Tat system comprises two distinct complexes: a TatABC complex, containing multiple copies of TatA, TatB and TatC subunits, and a separate TatA complex, containing only TatA subunits. Substrates initially bind to the TatABC complex, which probably triggers association of the separate TatA complex to form the active translocon.

Its subcellular location is the cell inner membrane. Part of the twin-arginine translocation (Tat) system that transports large folded proteins containing a characteristic twin-arginine motif in their signal peptide across membranes. Together with TatC, TatB is part of a receptor directly interacting with Tat signal peptides. TatB may form an oligomeric binding site that transiently accommodates folded Tat precursor proteins before their translocation. The chain is Sec-independent protein translocase protein TatB from Yersinia enterocolitica serotype O:8 / biotype 1B (strain NCTC 13174 / 8081).